A 325-amino-acid chain; its full sequence is Acetyl-coenzyme A carboxylase carboxyl transferase subunit alpha (325 aa).

The 255-residue stretch at 38–292 folds into the CoA carboxyltransferase C-terminal domain; that stretch reads RLEERLSKLQ…DGILKETLKS (255 aa).

It belongs to the AccA family. In terms of assembly, acetyl-CoA carboxylase is a heterohexamer composed of biotin carboxyl carrier protein (AccB), biotin carboxylase (AccC) and two subunits each of ACCase subunit alpha (AccA) and ACCase subunit beta (AccD).

It is found in the cytoplasm. The enzyme catalyses N(6)-carboxybiotinyl-L-lysyl-[protein] + acetyl-CoA = N(6)-biotinyl-L-lysyl-[protein] + malonyl-CoA. The protein operates within lipid metabolism; malonyl-CoA biosynthesis; malonyl-CoA from acetyl-CoA: step 1/1. In terms of biological role, component of the acetyl coenzyme A carboxylase (ACC) complex. First, biotin carboxylase catalyzes the carboxylation of biotin on its carrier protein (BCCP) and then the CO(2) group is transferred by the carboxyltransferase to acetyl-CoA to form malonyl-CoA. This Bacillus velezensis (strain DSM 23117 / BGSC 10A6 / LMG 26770 / FZB42) (Bacillus amyloliquefaciens subsp. plantarum) protein is Acetyl-coenzyme A carboxylase carboxyl transferase subunit alpha.